We begin with the raw amino-acid sequence, 296 residues long: tRNA (guanine(9)-N1)-methyltransferase (296 aa).

A disordered region spans residues 1–33 (MTPETNNDETLSRPKPRAALPPVPEGMSKSQWK). The SAM-dependent MTase TRM10-type domain maps to 85 to 274 (TPRVNVNQKD…SVLPARKLAE (190 aa)). S-adenosyl-L-methionine is bound by residues 181–182 (LT), Gly201, 205–209 (DKNRH), Cys213, Leu227, and 239–241 (KVL). Catalysis depends on Asp205, which acts as the Proton acceptor. The segment at 277 to 296 (DHAQESNSSSPAEEQDAQDI) is disordered.

Belongs to the class IV-like SAM-binding methyltransferase superfamily. TRM10 family. As to quaternary structure, monomer.

Its subcellular location is the cytoplasm. It localises to the nucleus. The catalysed reaction is guanosine(9) in tRNA + S-adenosyl-L-methionine = N(1)-methylguanosine(9) in tRNA + S-adenosyl-L-homocysteine + H(+). In terms of biological role, S-adenosyl-L-methionine-dependent guanine N(1)-methyltransferase that catalyzes the formation of N(1)-methylguanine at position 9 (m1G9) in cytoplasmic tRNA. This is tRNA (guanine(9)-N1)-methyltransferase from Eremothecium gossypii (strain ATCC 10895 / CBS 109.51 / FGSC 9923 / NRRL Y-1056) (Yeast).